The primary structure comprises 211 residues: Ubiquitin-conjugating enzyme E2 S (211 aa).

The UBC core domain occupies 11–157; that stretch reads HIIRQVYKEV…ARLMTEIHAQ (147 aa). Cysteine 95 acts as the Glycyl thioester intermediate in catalysis. A disordered region spans residues 157–211; sequence QGSSLRGKDPTDPCSSASATLVSGDGPMAKKHAGDRDKKLAAKKKTDKKRALRRL. A compositionally biased stretch (basic residues) spans 197 to 211; that stretch reads AAKKKTDKKRALRRL.

The protein belongs to the ubiquitin-conjugating enzyme family.

The enzyme catalyses S-ubiquitinyl-[E1 ubiquitin-activating enzyme]-L-cysteine + [E2 ubiquitin-conjugating enzyme]-L-cysteine = [E1 ubiquitin-activating enzyme]-L-cysteine + S-ubiquitinyl-[E2 ubiquitin-conjugating enzyme]-L-cysteine.. It participates in protein modification; protein ubiquitination. Functionally, catalyzes the covalent attachment of ubiquitin to other proteins. Acts as an essential factor of the anaphase promoting complex/cyclosome (APC/C), a cell cycle-regulated ubiquitin ligase that controls progression through mitosis. Acts by specifically elongating 'Lys-11'-linked polyubiquitin chains initiated by the E2 enzyme ube2c/ubch10 on APC/C substrates, enhancing the degradation of APC/C substrates by the proteasome and promoting mitotic exit. In Xenopus tropicalis (Western clawed frog), this protein is Ubiquitin-conjugating enzyme E2 S (ube2s).